Reading from the N-terminus, the 421-residue chain is MRKIGLAWQIFIGLILGIIVGAIFYGNPKVAAYLQPIGDIFLRLIKMIVIPIVISSLVVGVASVGDLKKLGKLGGKTIIYFEIITTIAIVVGLLAANIFQPGAGVNMKSLEKTDIQSYVDTTNEVQHHSMVETFVNIVPKNIFESLSTGDMLPIIFFSVMFGLGVAAIGEKGKPVLQFFQGTAEAMFYVTNQIMKFAPFGVFALIGVTVSKFGVESLIPLSKLVIVVYATMLFFIFAVLGGVAKLFGINIFHIIKILKDELILAYSTASSETVLPRIMDKMEKFGCPKAITSFVIPTGYSFNLDGSTLYQALAAIFIAQLYGIDMSVSQQISLLLVLMVTSKGIAGVPGVSFVVLLATLGTVGIPVEGLAFIAGIDRILDMARTAVNVIGNSLAAIIMSKWEGQYNEEKGKQYLAELQQSA.

At 1-3 (MRK) the chain is on the cytoplasmic side. A helical transmembrane segment spans residues 4–24 (IGLAWQIFIGLILGIIVGAIF). Residues 25–43 (YGNPKVAAYLQPIGDIFLR) are Extracellular-facing. The helical transmembrane segment at 44-64 (LIKMIVIPIVISSLVVGVASV) threads the bilayer. The Cytoplasmic portion of the chain corresponds to 65 to 77 (GDLKKLGKLGGKT). A helical membrane pass occupies residues 78–98 (IIYFEIITTIAIVVGLLAANI). Over 99–148 (FQPGAGVNMKSLEKTDIQSYVDTTNEVQHHSMVETFVNIVPKNIFESLST) the chain is Extracellular. Residues 149–169 (GDMLPIIFFSVMFGLGVAAIG) form a helical membrane-spanning segment. Over 170–198 (EKGKPVLQFFQGTAEAMFYVTNQIMKFAP) the chain is Cytoplasmic. Residues 199–219 (FGVFALIGVTVSKFGVESLIP) traverse the membrane as a helical segment. Residues 220 to 222 (LSK) lie on the Extracellular side of the membrane. A helical membrane pass occupies residues 223–243 (LVIVVYATMLFFIFAVLGGVA). A topological domain (cytoplasmic) is located at residue lysine 244. The helical transmembrane segment at 245–265 (LFGINIFHIIKILKDELILAY) threads the bilayer. Topologically, residues 266–306 (STASSETVLPRIMDKMEKFGCPKAITSFVIPTGYSFNLDGS) are extracellular. A helical transmembrane segment spans residues 307–327 (TLYQALAAIFIAQLYGIDMSV). The Cytoplasmic segment spans residues 328–330 (SQQ). The next 2 membrane-spanning stretches (helical) occupy residues 331 to 351 (ISLL…PGVS) and 352 to 372 (FVVL…LAFI). Residues 373 to 421 (AGIDRILDMARTAVNVIGNSLAAIIMSKWEGQYNEEKGKQYLAELQQSA) are Cytoplasmic-facing.

The protein belongs to the dicarboxylate/amino acid:cation symporter (DAACS) (TC 2.A.23) family. Homotrimer.

The protein localises to the cell membrane. In terms of biological role, this carrier protein is part of the Na(+)-dependent, binding-protein-independent glutamate-aspartate transport system. The chain is Proton/sodium-glutamate symport protein (gltT) from Bacillus caldotenax.